Here is a 396-residue protein sequence, read N- to C-terminus: Serine/threonine-protein kinase VRK1 (396 aa).

Residues 37–317 enclose the Protein kinase domain; it reads WKLGSPIGQG…LLDYVEKPLY (281 aa). ATP-binding positions include 43–51 and lysine 71; that span reads IGQGGFGCI. Lysine 71 is covalently cross-linked (Glycyl lysine isopeptide (Lys-Gly) (interchain with G-Cter in SUMO2)). Aspartate 177 (proton acceptor) is an active-site residue. A disordered region spans residues 352–396; that stretch reads KPVAKKRKKEAEESVESSVEDMECSDKQTEEATQTRSKTRKRVQK. Over residues 364–374 the composition is skewed to acidic residues; that stretch reads ESVESSVEDME. Serine 376 carries the phosphoserine modification. A required for interaction with the nucleosome region spans residues 387 to 393; sequence RSKTRKR.

Belongs to the protein kinase superfamily. CK1 Ser/Thr protein kinase family. VRK subfamily. In terms of assembly, interacts with HDAC1, KAT2B, SETDB1, KDM3A and KDM4A. Associates with the nucleosome through interactions with nucleosome DNA, histone H2A and histone H2B; the interaction with H2A and H2B is mediated by the nucleosome acidic patch, a cluster of negatively charged residues of H2A and H2B forming a cleft within the nucleosome core. Post-translationally, autophosphorylated at various serine and threonine residues. Autophosphorylation does not impair its ability to phosphorylate p53/TP53. Phosphorylation by PLK3 leads to induction of Golgi fragmentation during mitosis.

The protein resides in the nucleus. It is found in the cytoplasm. Its subcellular location is the cajal body. It carries out the reaction L-seryl-[protein] + ATP = O-phospho-L-seryl-[protein] + ADP + H(+). The catalysed reaction is L-threonyl-[protein] + ATP = O-phospho-L-threonyl-[protein] + ADP + H(+). Its activity is regulated as follows. Active in presence of Mn(2+), Mg(2+) and Zn(2+), but is not functional with Ca(2+) or Cu(2+). Has a higher affinity for Mn(2+) than for Mg(2+). RAN inhibits its autophosphorylation and its ability to phosphorylate histone H3. In terms of biological role, serine/threonine kinase involved in the regulation of key cellular processes including the cell cycle, nuclear condensation, transcription regulation, and DNA damage response. Controls chromatin organization and remodeling by mediating phosphorylation of histone H3 on 'Thr-4' and histone H2AX (H2aXT4ph). It also phosphorylates KAT5 in response to DNA damage, promoting KAT5 association with chromatin and histone acetyltransferase activity. Is involved in the regulation of cell cycle progression of neural progenitors, and is required for proper cortical neuronal migration. Is involved in neurite elongation and branching in motor neurons, and has an essential role in Cajal bodies assembly, acting through COIL phosphorylation and the control of coilin degradation. Involved in Golgi disassembly during the cell cycle: following phosphorylation by PLK3 during mitosis, it is required to induce Golgi fragmentation. Phosphorylates BANF1: disrupts its ability to bind DNA, reduces its binding to LEM domain-containing proteins and causes its relocalization from the nucleus to the cytoplasm. Phosphorylates TP53BP1 and p53/TP53 on 'Thr-18', preventing the interaction between p53/TP53 and MDM2. Phosphorylates ATF2 which activates its transcriptional activity. Phosphorylates JUN. The protein is Serine/threonine-protein kinase VRK1 (VRK1) of Bos taurus (Bovine).